A 126-amino-acid chain; its full sequence is Interleukin-18-binding protein (126 aa).

An N-terminal signal peptide occupies residues 1–20 (MRILFLIAFMYGCVHPYVNA).

Belongs to the orthopoxvirus OPG022 family.

Its subcellular location is the secreted. In terms of biological role, soluble IL18-binding protein that may modulate the host antiviral response. The polypeptide is Interleukin-18-binding protein (OPG022) (Bos taurus (Bovine)).